A 948-amino-acid chain; its full sequence is MAEPLAVETKPLSNGNANGNAVGIAESASAVFQEKLKLQQQEESNEIAAVPKYGLKLKFDHVWPEKRIQNVRASIRQTLPMVPLVCRYAAYYWKVSREGRRVYMDYYYMENGKQIYGVPIGGIGGGTIGRGYAGEFCRFQMRPGIYEYNVVLANQFIVTIKDPKGCTIFQSLLSKCSTRDKTSDPDGDPDGERTKCQLPNCSSRAKQPLSAWHSNIEDTRCSYTGLYPRSWTEYDLSHYGVRLTCRQVSPVIPHEYRESSLPCAVFVWSVENVCDQERKVSITFTFKNGTGNKKQDAEGGAESQLISEGNAKGVSIRQKISEMPCSYNLACRVLPEISITRCPQFDPAGNGEQLWAQLKEHGQLSEHPTSEALKTKDIGVAVCGQVALKPMASHDLEFVLAWDMPKIQFPRKMQTHTRYYTKYFDDSGDSGPRICEYALRQYSTWERLIDAWQRPILNDETLPDWYKCAIFNQLYFISDGGTIWLKCDSSLGKELAYDDPRLAYGRFGYLEGHEYRMYNTYDVHFYASPALAHLWPNLQVSLQYDFKDAIAAELNDTRKMLYDGKVMPRKVKNCVPHDLGDPDEEPFTLINCYNIHDVNDWKDLNTKFVLQVYRDYYVLNELAQAQSDNASKFSSIEFIDKESLYELYSQDNKRKNSADEKQQNRKSASMYINETNGKVYLMDAIGYLKAMYASCKAIMERTIEYDKDNDGLIENTKMPDQTYDSWVMDGPSAYCSGLWLAALQAMSAMATILDQPNDCLRYQDILEKGKRSLEEKLWNGSYYRFDLSHSHRDTIMADQLCGHWYLKSCGFDYEIYPKENVRTALKRIYDNNVMGFHEGNIGAANGFIANASEPTKPGHVDNSNIQAEEVWPGVVYALAATMIQEGMFEEAFQTAGGMYKTLSQRIGMNFETPEALYGEKRYRSIGYMRPLSIWSMQVALERRRAQRD.

At 1 to 736 (MAEPLAVETK…VMDGPSAYCS (736 aa)) the chain is on the extracellular side. The segment covering 177–195 (STRDKTSDPDGDPDGERTK) has biased composition (basic and acidic residues). Residues 177–197 (STRDKTSDPDGDPDGERTKCQ) are disordered. Asn-200 is a glycosylation site (N-linked (GlcNAc...) asparagine). Ser-214 is subject to Phosphoserine. Residues Asn-288, Asn-555, and Asn-629 are each glycosylated (N-linked (GlcNAc...) asparagine). 2 positions are modified to phosphoserine: Ser-667 and Ser-669. N-linked (GlcNAc...) asparagine glycosylation occurs at Asn-673. A helical transmembrane segment spans residues 737 to 753 (GLWLAALQAMSAMATIL). Residues 754 to 948 (DQPNDCLRYQ…ALERRRAQRD (195 aa)) lie on the Cytoplasmic side of the membrane.

It belongs to the non-lysosomal glucosylceramidase family.

It is found in the cell membrane. The enzyme catalyses a beta-D-glucosyl-(1&lt;-&gt;1')-N-acylsphing-4-enine + H2O = an N-acylsphing-4-enine + D-glucose. In terms of biological role, non-lysosomal glucosylceramidase that catalyzes the conversion of glucosylceramide to free glucose and ceramide. This chain is Non-lysosomal glucosylceramidase, found in Drosophila melanogaster (Fruit fly).